Consider the following 234-residue polypeptide: Sugar fermentation stimulation protein homolog (234 aa).

It belongs to the SfsA family.

The protein is Sugar fermentation stimulation protein homolog of Edwardsiella ictaluri (strain 93-146).